The sequence spans 150 residues: D-aminoacyl-tRNA deacylase (150 aa).

A Gly-cisPro motif, important for rejection of L-amino acids motif is present at residues 137–138 (GP).

It belongs to the DTD family. In terms of assembly, homodimer.

The protein localises to the cytoplasm. It carries out the reaction glycyl-tRNA(Ala) + H2O = tRNA(Ala) + glycine + H(+). The enzyme catalyses a D-aminoacyl-tRNA + H2O = a tRNA + a D-alpha-amino acid + H(+). In terms of biological role, an aminoacyl-tRNA editing enzyme that deacylates mischarged D-aminoacyl-tRNAs. Also deacylates mischarged glycyl-tRNA(Ala), protecting cells against glycine mischarging by AlaRS. Acts via tRNA-based rather than protein-based catalysis; rejects L-amino acids rather than detecting D-amino acids in the active site. By recycling D-aminoacyl-tRNA to D-amino acids and free tRNA molecules, this enzyme counteracts the toxicity associated with the formation of D-aminoacyl-tRNA entities in vivo and helps enforce protein L-homochirality. The protein is D-aminoacyl-tRNA deacylase of Heliobacterium modesticaldum (strain ATCC 51547 / Ice1).